Here is a 693-residue protein sequence, read N- to C-terminus: MLERCPWKLISSPRNIPARSFLNSRGTYLVLRKSNILPLQHILRFSNFASKQCFPLRNGNNSASKALWNNKSKEKEPLNTSVKLASDVPDDKNVTGQMIVKDMLQYIWPKGKTNLKVRVVSALALLVAAKILNVQVPFYFKSIIDTMNTTLVQEVGALWSTVGAVVLGYGFARIFSTVFQELRNSVFAIVSQSAIRSVSSNVYQHLLNLDMNFHLSKQTGSITRAMDRGTKGISFILSSMVLHIIPITLEIAMVSGILTYKYGPSFSAIAATTVALYALFTVRTTSWRTVFRRQANAADSKASAAAIESLINYEAVKTFNNESYEMSRYEKHLSAYEKANVKVASSLAFLNSGQAIIFSTALTLMMYMGCRGIVTSNLTVGDLVMINQLVFQLSIPLNFLGSVYREMRQAFTDMEQLFSLKRINIQVKEAPDARDLVLKGGSIQFDNVHFSYNPNRPILNGCSFNIPAGAKVAFVGASGCGKSTILRLLFRFYDTDSGKILIDNQRLDQITLNSLRKAIGVVPQDTPLFNDTILYNIGYGNPKASNDEIVEAAKKAKIHDIIESFPEGYQTKVGERGLMISGGEKQRLAVSRLLLKNPEILFFDEATSALDTNTERALLRNINDLIKGSHKTSVFIAHRLRTIKDCDIIFVLEKGRVVEQGSHEQLMAKNSVYTSMWHSQESPFGESNKSGDA.

A mitochondrion-targeting transit peptide spans 1 to 28 (MLERCPWKLISSPRNIPARSFLNSRGTY). Residues 29–118 (LVLRKSNILP…PKGKTNLKVR (90 aa)) lie on the Mitochondrial matrix side of the membrane. A helical transmembrane segment spans residues 119-140 (VVSALALLVAAKILNVQVPFYF). In terms of domain architecture, ABC transmembrane type-1 spans 119–409 (VVSALALLVA…LGSVYREMRQ (291 aa)). Residues 141 to 163 (KSIIDTMNTTLVQEVGALWSTVG) are Mitochondrial intermembrane-facing. A helical membrane pass occupies residues 164–187 (AVVLGYGFARIFSTVFQELRNSVF). The Mitochondrial matrix portion of the chain corresponds to 188-236 (AIVSQSAIRSVSSNVYQHLLNLDMNFHLSKQTGSITRAMDRGTKGISFI). A helical transmembrane segment spans residues 237 to 260 (LSSMVLHIIPITLEIAMVSGILTY). A topological domain (mitochondrial intermembrane) is located at residue Lys-261. A helical transmembrane segment spans residues 262–282 (YGPSFSAIAATTVALYALFTV). Residues 283–348 (RTTSWRTVFR…ANVKVASSLA (66 aa)) are Mitochondrial matrix-facing. Glutathione contacts are provided by residues 288–292 (RTVFR) and 351–354 (NSGQ). The helical transmembrane segment at 349 to 367 (FLNSGQAIIFSTALTLMMY) threads the bilayer. The Mitochondrial intermembrane portion of the chain corresponds to 368-382 (MGCRGIVTSNLTVGD). A helical transmembrane segment spans residues 383-404 (LVMINQLVFQLSIPLNFLGSVY). Gly-401 is a glutathione binding site. The Mitochondrial matrix segment spans residues 405–693 (REMRQAFTDM…FGESNKSGDA (289 aa)). Residues 443–679 (IQFDNVHFSY…NSVYTSMWHS (237 aa)) enclose the ABC transporter domain. ATP-binding positions include Tyr-452 and 476 to 487 (GASGCGKSTILR).

It belongs to the ABC transporter superfamily. ABCB family. Heavy Metal importer (TC 3.A.1.210) subfamily. Homodimer.

It localises to the mitochondrion inner membrane. In terms of biological role, performs an essential function in the generation of cytoplasmic iron-sulfur proteins by mediating the ATP-dependent export of Fe/S cluster precursors synthesized by nfs1 and other mitochondrial proteins. Hydrolyzes ATP. Binds glutathione and may function by transporting a glutathione-conjugated iron-sulfur compound. The chain is Iron-sulfur clusters transporter atm1, mitochondrial from Schizosaccharomyces pombe (strain 972 / ATCC 24843) (Fission yeast).